The following is an 806-amino-acid chain: Fibroblast growth factor receptor 3 (806 aa).

An N-terminal signal peptide occupies residues 1 to 19 (MRAAWGSVWCLCLAAAVGA). Residues 20–364 (LPAARRRGAE…ELMEMDDSGS (345 aa)) lie on the Extracellular side of the membrane. An Ig-like C2-type 1 domain is found at 24 to 124 (RRRGAERSGG…VLGNFTVRVT (101 aa)). Cysteine 61 and cysteine 107 are oxidised to a cystine. N-linked (GlcNAc...) asparagine glycosylation is found at asparagine 83, asparagine 96, and asparagine 118. The disordered stretch occupies residues 121-146 (VRVTDSPSSGDDEDDDDESEDTGVPF). The span at 130–141 (GDDEDDDDESED) shows a compositional bias: acidic residues. Ig-like C2-type domains follow at residues 150–238 (PDKM…YQLD) and 247–349 (PILQ…AWLT). An intrachain disulfide couples cysteine 170 to cysteine 222. N-linked (GlcNAc...) asparagine glycosylation is found at asparagine 219, asparagine 256, asparagine 288, asparagine 309, and asparagine 322. Cysteine 269 and cysteine 333 form a disulfide bridge. A helical transmembrane segment spans residues 365-389 (VYAGILSYGTGLVLFILVLVIVIIC). Over 390 to 806 (RMKMPNKKAM…HVPCNGVIRT (417 aa)) the chain is Cytoplasmic. Positions 466-755 (LTLGKPLGEG…LTMTSTDEYL (290 aa)) constitute a Protein kinase domain. ATP-binding positions include 472-480 (LGEGCFGQV) and lysine 502. Aspartate 611 (proton acceptor) is an active-site residue. Residues tyrosine 641, tyrosine 642, tyrosine 718, and tyrosine 754 each carry the phosphotyrosine; by autocatalysis modification.

This sequence belongs to the protein kinase superfamily. Tyr protein kinase family. Fibroblast growth factor receptor subfamily. As to quaternary structure, monomer. Homodimer after ligand binding. Autophosphorylated. Binding of FGF family members together with heparan sulfate proteoglycan or heparin promotes receptor dimerization and autophosphorylation on tyrosine residues. Autophosphorylation occurs in trans between the two FGFR molecules present in the dimer.

The protein localises to the cell membrane. The enzyme catalyses L-tyrosyl-[protein] + ATP = O-phospho-L-tyrosyl-[protein] + ADP + H(+). With respect to regulation, present in an inactive conformation in the absence of bound ligand. Ligand binding leads to dimerization and activation by autophosphorylation on tyrosine residues. Functionally, tyrosine-protein kinase that acts as a cell-surface receptor for fibroblast growth factors and plays an essential role in the regulation of cell proliferation, differentiation and apoptosis. Plays an essential role in the regulation of chondrocyte differentiation, proliferation and apoptosis, and is required for normal skeleton development. Regulates both osteogenesis and postnatal bone mineralization by osteoblasts. Promotes apoptosis in chondrocytes, but can also promote cancer cell proliferation. Phosphorylates PLCG1, CBL and FRS2. Ligand binding leads to the activation of several signaling cascades. Activation of PLCG1 leads to the production of the cellular signaling molecules diacylglycerol and inositol 1,4,5-trisphosphate. Phosphorylation of FRS2 triggers recruitment of GRB2, GAB1, PIK3R1 and SOS1, and mediates activation of RAS, MAPK1/ERK2, MAPK3/ERK1 and the MAP kinase signaling pathway, as well as of the AKT1 signaling pathway. The polypeptide is Fibroblast growth factor receptor 3 (FGFR3) (Gallus gallus (Chicken)).